The primary structure comprises 257 residues: Putative hydro-lyase Bcep18194_B2576 (257 aa).

The protein belongs to the D-glutamate cyclase family.

In Burkholderia lata (strain ATCC 17760 / DSM 23089 / LMG 22485 / NCIMB 9086 / R18194 / 383), this protein is Putative hydro-lyase Bcep18194_B2576.